The following is a 359-amino-acid chain: Peptide chain release factor 1 (359 aa).

Gln-236 bears the N5-methylglutamine mark.

The protein belongs to the prokaryotic/mitochondrial release factor family. Methylated by PrmC. Methylation increases the termination efficiency of RF1.

The protein localises to the cytoplasm. Functionally, peptide chain release factor 1 directs the termination of translation in response to the peptide chain termination codons UAG and UAA. The protein is Peptide chain release factor 1 of Streptococcus pyogenes serotype M12 (strain MGAS2096).